The sequence spans 863 residues: Importin subunit beta-1 (863 aa).

19 HEAT repeats span residues 2–31 (NAGE…AART), 33–62 (FAQY…LALK), 85–124 (VEIK…ELAT), 129–159 (DLMV…YICE), 170–201 (SNAI…LYDS), 212–248 (EYER…MHLY), 253–299 (PFYM…EIQE), 314–360 (FARA…QVVG), 364–392 (VNPV…AFGS), 399–439 (VAML…SSFV), 449–481 (LSPM…VCHF), 496–530 (YEAI…LITF), 536–586 (LPMI…IIRR), 592–630 (RTSS…MNSL), 635–671 (EVYV…LARA), 677–715 (LPYC…ALAI), 720–767 (QTYL…ITQA), 778–815 (QPYV…LAES), and 822–861 (KSYF…KRQA). An Importin N-terminal domain is found at 21–101 (AEKQLENAAR…KSLALQTLGS (81 aa)).

The protein belongs to the importin beta family. Importin beta-1 subfamily. In terms of assembly, forms a complex with an importin alpha subunit. Interacts with Ran; interacts specifically with the GTP-bound form of Ran (GTP-Ran), protecting it from GTP hydrolysis and nucleotide exchange. Interacts with nucleoporins.

Its subcellular location is the cytoplasm. It localises to the nucleus envelope. The protein resides in the nucleus. The protein localises to the nuclear pore complex. In terms of biological role, importin beta subunit that functions in nuclear protein import through association with the importin alpha subunit, which binds to the clasical nuclear localization signal (cNLS) in cargo substrates. Docking of the importin/substrate complex to the nuclear pore complex (NPC) is mediated by importin beta through binding to nucleoporin FxFG repeats and the complex is subsequently translocated through the pore by an energy requiring, Ran-dependent mechanism. At the nucleoplasmic side of the NPC, GTP-Ran binds to importin beta and the three components separate, leading to release of the cargo. Importin alpha and beta are re-exported from the nucleus to the cytoplasm where GTP hydrolysis releases Ran from importin beta. The directionality of nuclear import is thought to be conferred by an asymmetric distribution of the GTP- and GDP-bound forms of Ran between the cytoplasm and nucleus. The chain is Importin subunit beta-1 from Schizosaccharomyces pombe (strain 972 / ATCC 24843) (Fission yeast).